The chain runs to 591 residues: L-fucose isomerase (591 aa).

Residues E337 and D361 each act as proton acceptor in the active site. Residues E337, D361, and H528 each contribute to the Mn(2+) site.

This sequence belongs to the L-fucose isomerase family. As to quaternary structure, homohexamer. Mn(2+) is required as a cofactor.

It is found in the cytoplasm. The enzyme catalyses L-fucose = L-fuculose. The protein operates within carbohydrate degradation; L-fucose degradation; L-lactaldehyde and glycerone phosphate from L-fucose: step 1/3. Its function is as follows. Converts the aldose L-fucose into the corresponding ketose L-fuculose. The polypeptide is L-fucose isomerase (Escherichia coli (strain 55989 / EAEC)).